The following is an 82-amino-acid chain: Large ribosomal subunit protein uL23 (82 aa).

The protein belongs to the universal ribosomal protein uL23 family. In terms of assembly, part of the 50S ribosomal subunit. Contacts protein L29.

In terms of biological role, binds to 23S rRNA. One of the proteins that surrounds the polypeptide exit tunnel on the outside of the ribosome. The protein is Large ribosomal subunit protein uL23 of Methanosarcina mazei (strain ATCC BAA-159 / DSM 3647 / Goe1 / Go1 / JCM 11833 / OCM 88) (Methanosarcina frisia).